The following is a 154-amino-acid chain: Mating pheromone 2 (154 aa).

The signal sequence occupies residues 1–16 (MKAIFIILAILMVTQA). A propeptide spanning residues 17-52 (FKMTSKVNTKLQSQIQSKFQSKNKLASTFQTSSQLK) is cleaved from the precursor.

It localises to the secreted. In terms of biological role, mating ciliate pheromones (or gamones) are diffusible extracellular communication signals that distinguish different intraspecific classes of cells commonly referred to as 'mating types'. They prepare the latter for conjugation by changing their cell surface properties. This Euplotoides octocarinatus (Freshwater ciliate) protein is Mating pheromone 2.